A 591-amino-acid polypeptide reads, in one-letter code: DEAD-box ATP-dependent RNA helicase 35 (591 aa).

The Q motif motif lies at 146–174; it reads KNFKDMKFPRPVLDTLKEKGIVQPTPIQV. Residues 177–361 form the Helicase ATP-binding domain; sequence LPVILAGRDM…RSALVKPVTV (185 aa). 190-197 serves as a coordination point for ATP; the sequence is AFTGSGKT. The DEAD box motif lies at 309 to 312; the sequence is DEAD. In terms of domain architecture, Helicase C-terminal spans 372 to 532; the sequence is DVIQEVEYVK…RIPPVLAELN (161 aa). The CCHC-type zinc-finger motif lies at 548 to 565; that stretch reads KGCAYCGGLGHRIRDCPK.

Belongs to the DEAD box helicase family. DDX41 subfamily.

It catalyses the reaction ATP + H2O = ADP + phosphate + H(+). In Arabidopsis thaliana (Mouse-ear cress), this protein is DEAD-box ATP-dependent RNA helicase 35 (RH35).